A 475-amino-acid polypeptide reads, in one-letter code: Ataxin-10 (475 aa).

An Omega-N-methylarginine modification is found at arginine 10. 2 positions are modified to phosphoserine: serine 12 and serine 77. A Phosphothreonine modification is found at threonine 82. At serine 430 the chain carries Phosphoserine.

Belongs to the ataxin-10 family. In terms of assembly, homooligomer. Interacts with GNB2. Interacts with IQCB1. Interacts with OGT. In terms of processing, polyubiquitinated. Post-translationally, phosphorylation at Ser-12 by AURKB promotes the association of ATXN10 with PLK1. Phosphorylation at Ser-77 and Thr-82 by PLK1 may play a role in the regulation of cytokinesis and may stimulate the proteasome-mediated degradation of ATXN10. In terms of tissue distribution, ubiquitous distribution. Markedly increased expression in testis, adrenals, and brain.

It localises to the cytoplasm. The protein localises to the perinuclear region. Its subcellular location is the midbody. It is found in the cytoskeleton. The protein resides in the cilium basal body. It localises to the microtubule organizing center. The protein localises to the centrosome. Its subcellular location is the centriole. May play a role in the regulation of cytokinesis. May play a role in signaling by stimulating protein glycosylation. Induces neuritogenesis by activating the Ras-MAP kinase pathway and is necessary for the survival of cerebellar neurons. Does not appear to play a major role in ciliogenesis. The sequence is that of Ataxin-10 (Atxn10) from Rattus norvegicus (Rat).